A 562-amino-acid chain; its full sequence is Tissue-type plasminogen activator (562 aa).

Residues 1-22 (MDAMKRGLCCVLLLCGAVFVSP) form the signal peptide. A propeptide spanning residues 23-32 (SQEIHARFRR) is cleaved from the precursor. The propeptide at 33–35 (GAR) is removed by plasmin. Residues 39–81 (VICRDEKTQMIYQQHQSWLRPVLRSNRVEYCWCNSGRAQCHSV) enclose the Fibronectin type-I domain. 17 cysteine pairs are disulfide-bonded: Cys41/Cys71, Cys69/Cys78, Cys86/Cys97, Cys91/Cys108, Cys110/Cys119, Cys127/Cys208, Cys148/Cys190, Cys179/Cys203, Cys215/Cys296, Cys236/Cys278, Cys267/Cys291, Cys299/Cys430, Cys342/Cys358, Cys350/Cys419, Cys444/Cys519, Cys476/Cys492, and Cys509/Cys537. The segment at 42 to 52 (RDEKTQMIYQQ) is important for binding to annexin A2. Positions 82–120 (PVKSCSEPRCFNGGTCQQALYFSDFVCQCPEGFAGKCCE) constitute an EGF-like domain. An O-linked (Fuc) threonine glycan is attached at Thr96. 2 Kringle domains span residues 127 to 208 (CYED…TPAC) and 215 to 296 (CYFG…VPSC). An N-linked (GlcNAc...) asparagine glycan is attached at Asn152. Asn219 carries an N-linked (GlcNAc...) asparagine; partial glycan. Residues 311 to 561 (IKGGLFADIA…YLDWIRDNMR (251 aa)) enclose the Peptidase S1 domain. Residues His357 and Asp406 each act as charge relay system in the active site. N-linked (GlcNAc...) asparagine glycosylation is present at Asn483. Ser513 functions as the Charge relay system in the catalytic mechanism.

The protein belongs to the peptidase S1 family. As to quaternary structure, heterodimer of chain A and chain B held by a disulfide bond. Forms a heterodimer with SERPINA5. Binds to fibrin with high affinity. This interaction leads to an increase in the catalytic efficiency of the enzyme between 100-fold and 1000-fold, due to an increase in affinity for plasminogen. Similarly, binding to heparin increases the activation of plasminogen. Binds to annexin A2, cytokeratin-8, fibronectin and laminin. Binds to mannose receptor and the low-density lipoprotein receptor-related protein (LRP1); these proteins are involved in TPA clearance. Yet unidentified interactions on endothelial cells and vascular smooth muscle cells (VSMC) lead to a 100-fold stimulation of plasminogen activation. In addition, binding to VSMC reduces TPA inhibition by PAI-1 by 30-fold. Binds LRP1B; binding is followed by internalization and degradation. Interacts with SERPINE1. In complex with SERPINE1, interacts with SORL1. Interacts with apyrase from Anopheles gambiae saliva; the interaction results in PLAT activation probably via an allosteric activation mechanism. In terms of processing, the single chain, almost fully active enzyme, can be further processed into a two-chain fully active form by a cleavage after Arg-310 catalyzed by plasmin, tissue kallikrein or factor Xa. Post-translationally, differential cell-specific N-linked glycosylation gives rise to two glycoforms, type I (glycosylated at Asn-219) and type II (not glycosylated at Asn-219). The single chain type I glycoform is less readily converted into the two-chain form by plasmin, and the two-chain type I glycoform has a lower activity than the two-chain type II glycoform in the presence of fibrin. N-glycosylation of Asn-152; the bound oligomannosidic glycan is involved in the interaction with the mannose receptor. In terms of processing, characterization of O-linked glycan was studied in Bowes melanoma cell line. Synthesized in numerous tissues (including tumors) and secreted into most extracellular body fluids, such as plasma, uterine fluid, saliva, gingival crevicular fluid, tears, seminal fluid, and milk.

The protein localises to the secreted. It localises to the extracellular space. The enzyme catalyses Specific cleavage of Arg-|-Val bond in plasminogen to form plasmin.. With respect to regulation, inhibited by SERPINA5. Inhibited by SERPINE1. Converts the abundant, but inactive, zymogen plasminogen to plasmin by hydrolyzing a single Arg-Val bond in plasminogen. By controlling plasmin-mediated proteolysis, it plays an important role in tissue remodeling and degradation, in cell migration and many other physiopathological events. During oocyte activation, plays a role in cortical granule reaction in the zona reaction, which contributes to the block to polyspermy. The chain is Tissue-type plasminogen activator from Homo sapiens (Human).